Here is a 56-residue protein sequence, read N- to C-terminus: Small integral membrane protein 39 (56 aa).

The chain crosses the membrane as a helical span at residues 33 to 53; it reads VVVSAVLALLVLINVVLIFLL.

The protein resides in the membrane. The chain is Small integral membrane protein 39 from Homo sapiens (Human).